A 138-amino-acid polypeptide reads, in one-letter code: Glutaredoxin-like protein C5orf63 (138 aa).

C41 and C44 are disulfide-bonded. Basic and acidic residues predominate over residues 55-64; the sequence is ENRQPYKDQK. The tract at residues 55 to 88 is disordered; it reads ENRQPYKDQKLPGTRRRRSPSSPSHPHMASQSGK.

This sequence belongs to the glutaredoxin family. YDR286C subfamily.

In Homo sapiens (Human), this protein is Glutaredoxin-like protein C5orf63 (C5orf63).